We begin with the raw amino-acid sequence, 713 residues long: Glycine--tRNA ligase beta subunit (713 aa).

Belongs to the class-II aminoacyl-tRNA synthetase family. Tetramer of two alpha and two beta subunits.

The protein resides in the cytoplasm. The enzyme catalyses tRNA(Gly) + glycine + ATP = glycyl-tRNA(Gly) + AMP + diphosphate. This is Glycine--tRNA ligase beta subunit from Leptothrix cholodnii (strain ATCC 51168 / LMG 8142 / SP-6) (Leptothrix discophora (strain SP-6)).